The primary structure comprises 211 residues: 2,3-bisphosphoglycerate-dependent phosphoglycerate mutase (211 aa).

Residues 9 to 16, 22 to 23, Arg-61, 88 to 91, Lys-99, 115 to 116, and 159 to 160 contribute to the substrate site; these read RHGQSDWN, TG, ERDY, RR, and GN. His-10 functions as the Tele-phosphohistidine intermediate in the catalytic mechanism. Glu-88 serves as the catalytic Proton donor/acceptor.

It belongs to the phosphoglycerate mutase family. BPG-dependent PGAM subfamily. As to quaternary structure, homodimer.

The catalysed reaction is (2R)-2-phosphoglycerate = (2R)-3-phosphoglycerate. The protein operates within carbohydrate degradation; glycolysis; pyruvate from D-glyceraldehyde 3-phosphate: step 3/5. In terms of biological role, catalyzes the interconversion of 2-phosphoglycerate and 3-phosphoglycerate. The protein is 2,3-bisphosphoglycerate-dependent phosphoglycerate mutase of Rhizobium meliloti (strain 1021) (Ensifer meliloti).